Reading from the N-terminus, the 53-residue chain is Small, acid-soluble spore protein K (53 aa).

Residues 1 to 53 (MGRQAEFWSESKNNSKIDGQPKAKARFASKRPNGTINTHPQERMRAANQQEEE) form a disordered region.

This sequence belongs to the SspK family.

The protein localises to the spore core. The sequence is that of Small, acid-soluble spore protein K from Bacillus cytotoxicus (strain DSM 22905 / CIP 110041 / 391-98 / NVH 391-98).